A 209-amino-acid chain; its full sequence is Uracil phosphoribosyltransferase (209 aa).

Residues Arg-79, Arg-104, and 131–139 contribute to the 5-phospho-alpha-D-ribose 1-diphosphate site; that span reads DPMLATGGS. Residues Ile-194 and 199–201 contribute to the uracil site; that span reads GDA. A 5-phospho-alpha-D-ribose 1-diphosphate-binding site is contributed by Asp-200.

This sequence belongs to the UPRTase family. Mg(2+) serves as cofactor.

The enzyme catalyses UMP + diphosphate = 5-phospho-alpha-D-ribose 1-diphosphate + uracil. It participates in pyrimidine metabolism; UMP biosynthesis via salvage pathway; UMP from uracil: step 1/1. Allosterically activated by GTP. Its function is as follows. Catalyzes the conversion of uracil and 5-phospho-alpha-D-ribose 1-diphosphate (PRPP) to UMP and diphosphate. The protein is Uracil phosphoribosyltransferase of Streptococcus mutans serotype c (strain ATCC 700610 / UA159).